A 185-amino-acid chain; its full sequence is Ribosome-recycling factor (185 aa).

Residues 142-164 (IKKDGDAGEDDVTRAEKDLDKST) show a composition bias toward basic and acidic residues. A disordered region spans residues 142-173 (IKKDGDAGEDDVTRAEKDLDKSTHQYTSQVDD).

The protein belongs to the RRF family.

It is found in the cytoplasm. Responsible for the release of ribosomes from messenger RNA at the termination of protein biosynthesis. May increase the efficiency of translation by recycling ribosomes from one round of translation to another. The protein is Ribosome-recycling factor of Mycolicibacterium gilvum (strain PYR-GCK) (Mycobacterium gilvum (strain PYR-GCK)).